Consider the following 4690-residue polypeptide: MDQVAVTRFPALHCFEGPKQRQSVGSNARHHTIRGNIDTQHQSQDETLRRFANFVSSLVGDDEISFDFIISPSNGGSDIAESGTAQAKKDPTQATSDYNGITLLRSTPFVESGHSEFGIIIRRQLRNNDSSLFTLEKSFVVAVDKSSYSVRICRDLVPRPLLQSISTSLCSYMGWTNPSQHSEEESNQELQLQTLNFQGQSVLNHPPLMTPPDFESQLCLPKRPQEYAKPLLHNAFLARVRENPGRIALDALSSTGRATYTYKSLDDLSSDLAEKILQIIGVDADHTDRNITVALSTSAELYIAWLGILKAGCVVSPVPTDCPSGLLQHMTGLTSSKVVLGSAETLEYFDRIIGDSSTFTFINVETIARQNYEHLLQRPPPLVNTSENDVAYILFTSGSTGKPKGVQITHHAAVCSIAANIAASPYSFESGPSSIRWFQMAAPTFDLSVLEIFVTFSIGGTICACDRTMMLTDAESVITQLEATITMTTPTLASLLRPSRIPKLREVWVCGEMLKREASELFARDRDPSVADGDTNLLNAYGPTEATITCTVDARVSLKHRGSLIGPPLPTCSNIILDSSEPPKAVPLGFAGELAIGGPQLSIGYLKSPEKTAAAFVDVEPYGKLYRTGDMARLIMGPDGTLQVEFLGRLSSDQIKILGRRVELGEIEAGLRNPLIAEVAAVALKPEVSGLPQVQLIAVVTCRTEKSDSDILAACQERAENVLQPHMRPSIYYVMDKLPRLASEKTDRKTLAKYCLSPEKSGLRRLRNGDVDGHREAGSSSIPMLQSVIEAVSSVAIVGSDKITSATTLLSLGIDSLRSVRLLQNFREIGIEGLQVTDILTCHNLGDLDTKAQQALNRSTPSLAKARNLQTLLIDFENRHKKQCLSALGFNEDNIVSFLPVTTSQAVALASFLLTADANGFQAVPGGKAFIQHTVYTVKPELNSQRIVESWTRVLSRYDIMRSVFVEVNDDLTPFAQCILSPDHEAAQIKPHFYSAKSDNECKDVIQAAQKAAEEKISLYEPPRRLSVVQSPTQTIIVFSQLHSVFDGGSETLLLEDIEREYFGQPSIERTGVLTAVERHFSENRAEAAQFWQAYMDGFLSPSFPCLRSTVPGPDENVCGGYSFMSDLSLESLTRQAAALQCSPLSILQAAWAQILFTYTGERDVAFGNTMSGRFTTELVNCSAPVLTIQSTRVNLNEENDKRNIDILLERTAQNTAALSYLHTPITGARYDTTIALQMYLNSGKGEALYERVCHPGMQNDLAVMIEVYPDRSGLLEFRLTYQTALLDDDAAYTMLANLARVTNHIMSYPNAKYMDPSVWTSLQGPGQLEQINGYHHLGQQLLHECVAEFAQKSPNAIALAFYDDLSVDHPKVQLTYADLEVKATRVAGFLMSQLPAKEGSKHVVPIFMEKCPELYITLLGILKAGAAWCPVDPSYPPARQIFLIEKTTAGICFTSKSTTSQLSSILPASFKSISVSDLLEGGSCSTSRTLKASESARLDNLSIQRSDIAYVIFTSGTTGTPKGVPISHESASLSIDSYIQRVNVDLDLRGCEVRFLQFANYTFDAFVCDVFTAWRLGGTLVSATRDILLGSFIALANKVGATHTSMTPTFASTLQPQDFETLRVATMGGEVLPQILADKWKSRMSLCNVYGPAETAINTTINRLSAASRSGNIGTALPAVNAYVMASGYPVMKHMLGELVISGPQLSPGYWDNVHSSNNRFRWNSTLQCRVYHTGDYVRQLADGSFDFVGRKDDLVKIRGMRVELTEISTVCSAGHESVVHSEVLLAKLPGSTQSSLICFVDCGLQKSSDVDNFCILKNEEAQLVAQAVKRHATAELPRHMVPDVFMPLNCLPRNQSSKVNRKRLLEVIGREWSMQPMSPVADEQVDPAWCIKHRPLLEKIQGVIKIMPTTLSRSTTLSELGVDSIGAIRLSSRLKNDGHDISAIQVLDSVTIEDLINHLSVKRQGTSNWKTLLSRYLDHWKPLVSRHLARDPAHFSLVPTTVFQDGMLVETLRDPMLYWASYSWRLPSTVDIARVRQAWQHVSKNHDILKVSFVPTAYFEQEETQSSGPSSMFIQLIDYNASMGWQEIVSDSGDWQQSIHALCANLQRTQHENNFSSPPWRVTILAQQDQRIMNLTIHHSLCDGEMLRSLMHDVAWAYSTAELPVKRCQVQEAVSRLAVRYSEPEGHKFWGDMLSPLVSQTSLGDATSNSPKAVVRKIRHRTTELQATRSTSKLTGLARRLGASSLSPLFRVTFGIMLTEYYEQQSVLFGEVRSERLLESQLVGAMAPLSATYPVPFRSSGNLKDMVHSQQILVMDSIRYGPPQPSDVRKILKKSRDEALYSAVYVLRQRSEDDGGSLAPWEEFKDIFEIFVDHEFALNVLEGADDTVTISLSVDETLMSSSAQAIFLQQLDALLIAFDKSAPEISLSGLNAHFPLDLLSIASSKVSAQYTSTVPPSHYIETWAKTHPEWKAVEVATGFLGSQKIVTEDWTYKKLNETANQVANLIIHASLHGRAIAVSLDRSLIAFAIIVGIMKSGNTYVPIEAGLPNDRKSFLLRDSRAAMAFVCDNNFDGVELPPETKVLDTKNQSFIENLSTQDTSDILNNYPENLDAYLLYTSGSTGAPKGVRVSRHNLSSFSDAWGKLIGNVAPKSLELGGVGKFLCLASRAFDVHIGEMFLAWRFGLCAVTGERLSMLDDLPRTFRELGVTHAGIVPSLLDQTGLVPEDAPHLVYLGVGGEKMTPRTQQIWSSSDRVALVNVYGPTEVTIGCSAGRILPDSDTRCIGHPLGDSVAHVLAPGSNEHVKKGMAGELVIEGSLVANGYLNRPDAKGFCDINGRKMYRTGDIVRMDADSSILFLGRKDEQVKVRGQRLELGEVSEVIRSLSPTDIDVVTLLLNHPGTSKQFLVSFVASSGAAVRGELRWINENYKEINNSLRQACEQTLPAYMVPDFIIPISFIPLRDTSAKTDAKALEHMFHTLSLGELFGESSSLVNKPTTAPSRDLTSIEKQILTVVKSVVGQDDKRDARPGSTLFQLGLDSIASVKLSFKLKKLGFSTTVARLLQNPTIEELGRMKNALKGSHHAEPSNSESITTRFEELEKETMNSLKDRETTHIESIRPCMPLQEVLVAHTMSHGSEADNAYVSHMIFELDPAVVVEHVKAAWAAVVKNTELLRTCFIDRENDIVQLVIKENHATPVWKHLSNGTNMLKEELLSCKKEIADDIVTNIDKSPPVRFTLASCDGADETNEMSLFMLSIHHALYDMVSIEMIFQDFEVAYTDSSLSRRPSTLPLLEHIAAQQQNESKAKSYWTTLFDGYDHRIEKISPRTAQTTARTLNASLTTLESLCSQTNMTLSALIQGVFAYVLARTLKRPDLIFGVVLSGRSIDVEGIDAMAAPCISTIPQRLNIGTDGETIAELITTVQDRLFKSMEYQYTSLRSLSRWLEISGPLFSSLFSFTKLSPPEDSGSSKSRILKPTEGEMFLDFELALECEADPGTDTVTLRTRSTMFDKMEELDALLEQMESLVTSFTRGENKAVDGDFGSMLHTRLLPPHGSLQEESDDWSVLEQQIRDVVVAFSGASPNEVKRTTPFIKYGIDSITTIRFSTLLRKNGFWVSGADVLRNPSVAKLATHIQTTSSFNGTAKDSDDEASESAGIGNWSKALLAGAVSTKVLDDVVAVYPLTPLQAGMISATVMMDPTLYAHHHPFRLPQGTSIDQVRSAWSRLVAKHDILRTSFHEINQPRPQLVGAVHQESILNWHEVATEDVQVAIDDLIKRTQFPSVSSFETPPVKATVIRSPEDMLLVVSLHHATYDGTSIRFIFEDLWAILRGNRVPERNPFYETAMKIHNMSSGSVGFWADSLSGYGGAAAIAEAEDIQNKMTSKTMLLAQDTSALEQWCTEKGITIQTICQLAVSKAVCAQTKSRDVVLGQVHAARLDINGADKVAGPMLNTVPLRLCIHDDSFTNHDYLRDLQAFQNKSLDHLHASLSDIQRLWRKENGRDGQLFEVLFIFRKGEDATEAPFWQPFEPEGSKESLPPSHYDLVIEVHQKSRGGLELEVHSRFADDTTSNLMSLLVESFESIRKHPDELAISSPGVLSKVPKPGLTRETGAVPTSPFDQSAIDQFLDPLRKVLSETTDTPVSSIDAQTSIFSIGVDSIVAIRVAGACRKAHIPLHTMEIMRNAKIGKLCEVAFAKSGQAAPNRSTTESNGVAPLLDQEVKKAAASKLGRAEAEIQEILPVLPGQEYHLACWLTSGKTLLEPVWVFKAENGLDAGRLRDTWISLVQKNDSLRTCFAQVKPTLAVQAILKPDCVDAAKSFTVQQVPENMTMEEYVKSEIHHLSLSPSSLYEPPVRIVLIQGGREGVSVLLRLHHALYDAWSMGILIDELSSLYCGTMQKPCPPLSVSHFAQFTQQKLRGKNEEQFWTETLGQCDPTILTPKADINTDSKSCNRAFVSFECVDVSMGALKSAARAFGITPQCLIQVAFGRMLSDVTESSSPVFGYYTAGRSAELEGIEALASPTLNMLPVAVPKDLVASQLAGTSLSILLQSFQDRTNSQSDYEQSRLRDVIKWAPNKGVSPLFNAHLNILWNDEILLKPQVSKDTLLRPWPLGVPSDYASPTPLSRGSSVDGLDTSFLPTNVLFADVGPSRETANLAIGIGCDPTLRDAQGLEEIARMFSGHLSRLVGSRDLV.

The interval 238-656 is adenylation 1; sequence ARVRENPGRI…LGRLSSDQIK (419 aa). The Carrier 1 domain maps to 779 to 856; the sequence is SSSIPMLQSV…DLDTKAQQAL (78 aa). The residue at position 816 (Ser816) is an O-(pantetheine 4'-phosphoryl)serine. Residues 925 to 1175 form a condensation 1 region; the sequence is PGGKAFIQHT…AFGNTMSGRF (251 aa). The tract at residues 1349–1760 is adenylation 2; that stretch reads EFAQKSPNAI…GRKDDLVKIR (412 aa). In terms of domain architecture, Carrier 2 spans 1889 to 1965; the sequence is PAWCIKHRPL…DLINHLSVKR (77 aa). Ser1926 carries the post-translational modification O-(pantetheine 4'-phosphoryl)serine. The condensation 2 stretch occupies residues 2001–2285; sequence PTTVFQDGML…SERLLESQLV (285 aa). The adenylation 3 stretch occupies residues 2464 to 2869; that stretch reads TWAKTHPEWK…GRKDEQVKVR (406 aa). One can recognise a Carrier 3 domain in the interval 3002–3079; that stretch reads RDLTSIEKQI…ELGRMKNALK (78 aa). The residue at position 3040 (Ser3040) is an O-(pantetheine 4'-phosphoryl)serine. A condensation 3 region spans residues 3121–3530; that stretch reads CMPLQEVLVA…QMESLVTSFT (410 aa). Positions 3564 to 3637 constitute a Carrier 4 domain; the sequence is SVLEQQIRDV…KLATHIQTTS (74 aa). Ser3598 carries the post-translational modification O-(pantetheine 4'-phosphoryl)serine. Residues 3679–4087 form a condensation 4 region; the sequence is VYPLTPLQAG…FESIRKHPDE (409 aa). In terms of domain architecture, Carrier 5 spans 4119–4195; the sequence is SAIDQFLDPL…KLCEVAFAKS (77 aa). At Ser4156 the chain carries O-(pantetheine 4'-phosphoryl)serine. Residues 4262-4589 form a condensation 5 region; the sequence is WVFKAENGLD…FNAHLNILWN (328 aa).

It belongs to the NRP synthetase family.

It functions in the pathway siderophore biosynthesis. Functionally, nonribosomal peptide synthetase required for the biosynthetis of epichloenin A, an extracellular siderophore that plays a crucial role in endophyte-grass symbioses. SidN assembles epichloenin A by activating and incorporating three trans-anhydromevalonylhydroxyornithine (trans-AMHO), 1 glutamine and 4 glycine moieties. Trans-AMHO is produced from L-ornithine via 2 steps involving a L-ornithine N(5)-monooxygenase and an AHMO-N(5)-transacylase that have still to be identified. The third adenylation domain (A3) of sidN incorporates the hydroxamate groups of the siderophore which forms an octahedral iron complex. The other component amino acids are assembled by sidN adenylation domains A1 and A2. The polypeptide is Nonribosomal peptide synthetase sidN (Epichloe festucae (strain E2368)).